A 426-amino-acid polypeptide reads, in one-letter code: Phosphoribosylamine--glycine ligase (426 aa).

One can recognise an ATP-grasp domain in the interval 113-320; that stretch reads KSLMTEAKIP…LLELLYRAST (208 aa). 139–200 is a binding site for ATP; it reads LESKSIPIVI…EEFMEGQEAS (62 aa). Mg(2+)-binding residues include glutamate 290 and asparagine 292.

Belongs to the GARS family. Mg(2+) serves as cofactor. It depends on Mn(2+) as a cofactor.

The catalysed reaction is 5-phospho-beta-D-ribosylamine + glycine + ATP = N(1)-(5-phospho-beta-D-ribosyl)glycinamide + ADP + phosphate + H(+). It participates in purine metabolism; IMP biosynthesis via de novo pathway; N(1)-(5-phospho-D-ribosyl)glycinamide from 5-phospho-alpha-D-ribose 1-diphosphate: step 2/2. This is Phosphoribosylamine--glycine ligase from Leptospira interrogans serogroup Icterohaemorrhagiae serovar copenhageni (strain Fiocruz L1-130).